The sequence spans 857 residues: MDDRYDPQVIEAKWQQEWAARQLDRTDTDPQKPKFYALSMFPYPSGNLHMGHVRNYTITDVIARCRRMQGYRVLHPMGWDAFGLPAENAAIERGIHPRVWTQQNIGQMRQELQRLGLSYDWEREVTTCHPDYYRWTQWLFLEFFEAGLAYQKEAAVNWDPVDQTVLANEQVDSEGRSWRSGALVERRLLKQWFLKITAYAEELLNDLEQLTGWPERVKLMQANWIGQSRGAYLEFPIVGSDEKIGVFTTRPDTVYGVTYVVLAPEHPLTLKVTTSRRRKTVEAFIASVQQESELERTAGDRPKRGVATGGKALNPFTGEEIPIWIANYVLYEYGTGAVMGVPAHDERDFQFAKAHRLPIRQVIIPPDGKASTRLRAAYTEPGKLINSGQFDGMDSTAAKVAITEYATAQGWGREHVQYRLRDWLISRQRYWGVPIPIIHCPQCGPVPVPRSELPVLLPEEVEFTGRGPSPLAKLAAWRDVPCPKCGGPAQRETDTMDTFIDSSWYYFRYADARNSEAPFDPAAIKDWLPVDQYVGGIEHAILHLLYSRFFTKVLRDRQLVHVSEPFQRLLTQGMVQGRTYKNPRTGKYVIPSRIADLNQPTDPDTGEALEVVYEKMSKSKYNGVAPGDVIQQYGADTARMFILFKAPPEKDLEWDDADVEGQFRFLNRVWRLVQTFKAKGGRLGQPLPATLTKAEKDLRRAIHTAIKEISEDIEGDYQLNTAVAELMKLSNALSSADCYTSGVYSEGIQTLLTLLAPFAPHISEELWHQLGGTDSIHRQPWPKADPTALVADEITLVIQVMGKTRGAIQVPATASQAELEEAAQHSEIGQRYLAGKTIKKIIVVPGKLVNFVLESSR.

The short motif at 42 to 52 is the 'HIGH' region element; the sequence is PYPSGNLHMGH. Positions 615–619 match the 'KMSKS' region motif; that stretch reads KMSKS. Lys-618 serves as a coordination point for ATP.

Belongs to the class-I aminoacyl-tRNA synthetase family.

The protein resides in the cytoplasm. It catalyses the reaction tRNA(Leu) + L-leucine + ATP = L-leucyl-tRNA(Leu) + AMP + diphosphate. The polypeptide is Leucine--tRNA ligase (Thermosynechococcus vestitus (strain NIES-2133 / IAM M-273 / BP-1)).